We begin with the raw amino-acid sequence, 327 residues long: uncharacterized protein (327 aa).

Over 1–19 (MSIAQDRGIVFKLLSIYRA) the chain is Cytoplasmic. A helical transmembrane segment spans residues 20–40 (AAGIFMALAQLIVIFFGYCDF). At 41 to 51 (KIKGYRIASYN) the chain is on the extracellular side. The helical transmembrane segment at 52–72 (APTFASSFIILAVCLLLVVVL) threads the bilayer. At 73 to 104 (ENPEVKVTNSENSLFSALKQFFRVERKKLISC) the chain is on the cytoplasmic side. A helical transmembrane segment spans residues 105–125 (LILLWSMFLSSFIMSEVVYFM). Residues 126–141 (PLFLTLHVNWDTKFQG) are Extracellular-facing. The chain crosses the membrane as a helical span at residues 142–162 (IAFMVASILGVTGSYFAPKLI). Over 163–199 (NVGCSCGRAKDGGLEESDTTGSETVEVKKKDSLYSGQ) the chain is Cytoplasmic. Residues 200–220 (VFLSIFALFVSLLGQAFMIGA) form a helical membrane-spanning segment. Residues 221–235 (SEALKHKSMPPTNSG) lie on the Extracellular side of the membrane. Residues 236–256 (IFFSAGMSITLLGYNFLASSI) form a helical membrane-spanning segment. The Cytoplasmic portion of the chain corresponds to 257–275 (PALFSMYIDPKLKVQLMPS). Residues 276–296 (IGAISGIGKLVAPIVLAALYG) traverse the membrane as a helical segment. Topologically, residues 297-300 (TRLG) are extracellular. The chain crosses the membrane as a helical span at residues 301-321 (LSIAVGFGMILVAVSIPPLIW). The Cytoplasmic portion of the chain corresponds to 322–327 (LRKKRC).

Its subcellular location is the membrane. This is an uncharacterized protein from Saccharomyces cerevisiae (strain ATCC 204508 / S288c) (Baker's yeast).